We begin with the raw amino-acid sequence, 456 residues long: Chordin-like protein 1 (456 aa).

A signal peptide spans 1–27 (MRKKWKMGGMKYIFSLLFFLLLEGGKT). 2 VWFC domains span residues 35-100 (TYCM…PRCP) and 113-179 (KSCE…RVCR). A glycan (N-linked (GlcNAc...) asparagine) is linked at N118. Positions 179–181 (RGD) match the Cell attachment site motif. The tract at residues 202–223 (ARHSYHRSHYDPPPSRQAGGLS) is disordered. One can recognise a VWFC 3 domain in the interval 258–323 (QVCVSNGKTY…IDGKCCKVCP (66 aa)). Residue N291 is glycosylated (N-linked (GlcNAc...) asparagine).

Expressed in the developing cornea and in the eye anterior segment in addition to the retina. Differentially expressed in the fetal brain. There is high expression in cerebellum and neocortex. Expressed in retinal pericytes.

Its subcellular location is the secreted. In terms of biological role, antagonizes the function of BMP4 by binding to it and preventing its interaction with receptors. Alters the fate commitment of neural stem cells from gliogenesis to neurogenesis. Contributes to neuronal differentiation of neural stem cells in the brain by preventing the adoption of a glial fate. May play a crucial role in dorsoventral axis formation. May play a role in embryonic bone formation. May also play an important role in regulating retinal angiogenesis through modulation of BMP4 actions in endothelial cells. Plays a role during anterior segment eye development. The sequence is that of Chordin-like protein 1 (CHRDL1) from Homo sapiens (Human).